The chain runs to 275 residues: MEVQKLPDQSLISSMMLDSRCGLNDLYPIARLTQKMEDALTVSGKPAACPVDQDCPYTIELIQPEDGEAVIAMLKTFFFKDEPLNTFLDLGECKELEKYSLKPLPDNCSYKAVNKKGEIIGVFLNGLMRRPSPDDVPEKAADSCEHPKFKKILSLMDHVEEQFNIFDVYPDEELILDGKILSVDTNYRGLGIAGRLTERAYEYMRENGINVYHVLCSSHYSARVMEKLGFHEVFRMQFADYKPQGEVVFKPAAPHVGIQVMAKEVGPAKAAQTKL.

Acetyl-CoA is bound by residues 181 to 183 and 189 to 193; these read LSV and GLGIA. Positions 181 to 254 constitute an N-acetyltransferase domain; that stretch reads LSVDTNYRGL…GEVVFKPAAP (74 aa).

Belongs to the acetyltransferase family. AANAT subfamily. As to expression, in the adult, expressed in the midgut portion of the thoracic segments and the frontal half of the abdomen (at protein level). Expressed in the epithelial cell layer facing the lumen of the gut (at protein level). In the brain, expressed in a sub-populations of neurons and astrocytes, and in a set of distinct stripes in the optic lobes (at protein level). Expressed mainly in serotonergic neurons but also in subsets of glutamatergic, GABAergic and cholinergic neurons (at protein level).

The protein resides in the cytoplasm. The protein localises to the nucleus. The catalysed reaction is a 2-arylethylamine + acetyl-CoA = an N-acetyl-2-arylethylamine + CoA + H(+). It catalyses the reaction serotonin + acetyl-CoA = N-acetylserotonin + CoA + H(+). The enzyme catalyses dopamine + acetyl-CoA = N-acetyldopamine + CoA + H(+). It carries out the reaction tyramine + acetyl-CoA = N-acetyltyramine + CoA + H(+). The catalysed reaction is octopamine + acetyl-CoA = N-acetyloctopamine + CoA + H(+). It catalyses the reaction 5-methoxytryptamine + acetyl-CoA = melatonin + CoA + H(+). The enzyme catalyses 2-phenylethylamine + acetyl-CoA = N-(2-phenylethyl)acetamide + CoA + H(+). It carries out the reaction noradrenaline + acetyl-CoA = N-acetylnoradrenaline + CoA + H(+). The catalysed reaction is tyramine + butanoyl-CoA = N-butanoyltyramine + CoA + H(+). It catalyses the reaction tyramine + hexanoyl-CoA = N-hexanoyltyramine + CoA + H(+). The enzyme catalyses tryptamine + acetyl-CoA = N-acetyltryptamine + CoA + H(+). It carries out the reaction dopamine + hexadecanoyl-CoA = N-hexadecanoyl-dopamine + CoA + H(+). The catalysed reaction is dopamine + (9Z)-octadecenoyl-CoA = N-(9Z-octadecanoyl)-dopamine + CoA + H(+). It catalyses the reaction serotonin + hexadecanoyl-CoA = N-hexadecanoyl-serotonin + CoA + H(+). The enzyme catalyses serotonin + (9Z)-octadecenoyl-CoA = N-(9Z-octadecenoyl)-serotonin + CoA + H(+). It carries out the reaction serotonin + octadecanoyl-CoA = N-octadecanoyl-serotonin + CoA + H(+). The catalysed reaction is serotonin + (5Z,8Z,11Z,14Z)-eicosatetraenoyl-CoA = N-[(5Z,8Z,11Z,14Z)-eicosatetraenoyl]-serotonin + CoA + H(+). It functions in the pathway aromatic compound metabolism; melatonin biosynthesis; melatonin from serotonin: step 1/2. With respect to regulation, inhibited by long-chain acyl-CoA thioesters, oleoyl-CoA (an analog of acetyl-CoA) and tyrosol (an analog of tyramine). In terms of biological role, catalyzes N-acetylation of tryptamine, tyramine, dopamine, serotonin and octopamine. In astrocytes, regulates sleep homeostasis by limiting the accumulation of serotonin and dopamine in the brain upon sleep deprivation. Is not essential for sclerotization. This chain is Arylalkylamine N-acetyltransferase 1, found in Drosophila melanogaster (Fruit fly).